Consider the following 725-residue polypeptide: Putative oligopeptide transporter YGL114W (725 aa).

9 helical membrane passes run 28–48, 134–154, 254–274, 353–373, 449–469, 472–492, 564–584, 644–664, and 697–717; these read ATIA…QFGL, FREL…FAVP, IIIL…SYFV, WILW…FIVV, ISGC…LFGI, IPLY…ILGI, FCAQ…MYLC, YGYG…GIFN, and IVFS…NMLF.

Belongs to the oligopeptide OPT transporter family.

Its subcellular location is the membrane. This Saccharomyces cerevisiae (strain ATCC 204508 / S288c) (Baker's yeast) protein is Putative oligopeptide transporter YGL114W.